A 295-amino-acid polypeptide reads, in one-letter code: Excinuclease cho (295 aa).

Residues 33-108 (TRPGVYLFHG…IKEQQPLFNK (76 aa)) enclose the GIY-YIG domain.

Its function is as follows. Incises the DNA at the 3' side of a lesion during nucleotide excision repair. Incises the DNA farther away from the lesion than UvrC. Not able to incise the 5' site of a lesion. In vitro, the incision activity of Cho is UvrA and UvrB dependent. When a lesion remains because UvrC is not able to induce the 3' incision, Cho incises the DNA. Then UvrC makes the 5' incision. The combined action of Cho and UvrC broadens the substrate range of nucleotide excision repair. In Escherichia coli (strain K12), this protein is Excinuclease cho (cho).